Reading from the N-terminus, the 98-residue chain is Large ribosomal subunit protein eL21 (98 aa).

Positions 1 to 23 (MVDRKGKGFRRKTRDKLSKHPRQ) are disordered. Positions 7-23 (KGFRRKTRDKLSKHPRQ) are enriched in basic residues.

This sequence belongs to the eukaryotic ribosomal protein eL21 family.

This is Large ribosomal subunit protein eL21 from Nanoarchaeum equitans (strain Kin4-M).